Here is a 570-residue protein sequence, read N- to C-terminus: Sulfite reductase [NADPH] hemoprotein beta-component (570 aa).

The [4Fe-4S] cluster site is built by Cys434, Cys440, Cys479, and Cys483. Position 483 (Cys483) interacts with siroheme.

It belongs to the nitrite and sulfite reductase 4Fe-4S domain family. As to quaternary structure, alpha(8)-beta(8). The alpha component is a flavoprotein, the beta component is a hemoprotein. Siroheme is required as a cofactor. [4Fe-4S] cluster serves as cofactor.

The catalysed reaction is hydrogen sulfide + 3 NADP(+) + 3 H2O = sulfite + 3 NADPH + 4 H(+). It functions in the pathway sulfur metabolism; hydrogen sulfide biosynthesis; hydrogen sulfide from sulfite (NADPH route): step 1/1. Component of the sulfite reductase complex that catalyzes the 6-electron reduction of sulfite to sulfide. This is one of several activities required for the biosynthesis of L-cysteine from sulfate. The protein is Sulfite reductase [NADPH] hemoprotein beta-component of Shigella boydii serotype 4 (strain Sb227).